The following is a 188-amino-acid chain: Protein-L-isoaspartate O-methyltransferase (188 aa).

Ser-33 is a catalytic residue.

It belongs to the methyltransferase superfamily. L-isoaspartyl/D-aspartyl protein methyltransferase family.

Its subcellular location is the cytoplasm. It carries out the reaction [protein]-L-isoaspartate + S-adenosyl-L-methionine = [protein]-L-isoaspartate alpha-methyl ester + S-adenosyl-L-homocysteine. In terms of biological role, catalyzes the methyl esterification of L-isoaspartyl residues in peptides and proteins that result from spontaneous decomposition of normal L-aspartyl and L-asparaginyl residues. It plays a role in the repair and/or degradation of damaged proteins. This chain is Protein-L-isoaspartate O-methyltransferase, found in Methanocella arvoryzae (strain DSM 22066 / NBRC 105507 / MRE50).